Here is a 362-residue protein sequence, read N- to C-terminus: tRNA-specific 2-thiouridylase MnmA 1 (362 aa).

ATP contacts are provided by residues 29–36 (AMSGGVDS) and Met55. The active-site Nucleophile is Cys109. Residues Cys109 and Cys201 are joined by a disulfide bond. Gly133 is an ATP binding site. The tract at residues 151 to 153 (KDQ) is interaction with tRNA. Cys201 serves as the catalytic Cysteine persulfide intermediate.

This sequence belongs to the MnmA/TRMU family.

The protein resides in the cytoplasm. It catalyses the reaction S-sulfanyl-L-cysteinyl-[protein] + uridine(34) in tRNA + AH2 + ATP = 2-thiouridine(34) in tRNA + L-cysteinyl-[protein] + A + AMP + diphosphate + H(+). Catalyzes the 2-thiolation of uridine at the wobble position (U34) of tRNA, leading to the formation of s(2)U34. The polypeptide is tRNA-specific 2-thiouridylase MnmA 1 (Fusobacterium nucleatum subsp. nucleatum (strain ATCC 25586 / DSM 15643 / BCRC 10681 / CIP 101130 / JCM 8532 / KCTC 2640 / LMG 13131 / VPI 4355)).